Consider the following 90-residue polypeptide: MKTLLLTLVVVTIVCLDVGNSFSCYKTPDVKSEPCAPGENLCYTKTWCDRFCSIRGKVIELGCAATCPPAEPRKDITCCSTDNCNPHPAH.

The N-terminal stretch at methionine 1–serine 21 is a signal peptide. 5 disulfides stabilise this stretch: cysteine 24–cysteine 42, cysteine 35–cysteine 63, cysteine 48–cysteine 52, cysteine 67–cysteine 78, and cysteine 79–cysteine 84.

This sequence belongs to the three-finger toxin family. Long-chain subfamily. Type II alpha-neurotoxin sub-subfamily. In terms of tissue distribution, expressed by the venom gland.

The protein resides in the secreted. Functionally, binds with high affinity to muscular (alpha-1/CHRNA1) and neuronal (alpha-7/CHRNA7) nicotinic acetylcholine receptor (nAChR) and inhibits acetylcholine from binding to the receptor, thereby impairing neuromuscular and neuronal transmission. In Austrelaps superbus (Lowland copperhead snake), this protein is Long neurotoxin 1.